Reading from the N-terminus, the 753-residue chain is Probable phosphoenolpyruvate synthase (753 aa).

Histidine 398 (tele-phosphohistidine intermediate) is an active-site residue. Arginine 488, arginine 535, glutamate 631, glycine 653, threonine 654, asparagine 655, and aspartate 656 together coordinate substrate. Mg(2+) is bound at residue glutamate 631. A Mg(2+)-binding site is contributed by aspartate 656. Cysteine 703 serves as the catalytic Proton donor.

Belongs to the PEP-utilizing enzyme family. Mg(2+) is required as a cofactor.

It carries out the reaction pyruvate + ATP + H2O = phosphoenolpyruvate + AMP + phosphate + 2 H(+). The protein operates within carbohydrate biosynthesis; gluconeogenesis. Functionally, catalyzes the phosphorylation of pyruvate to phosphoenolpyruvate. The chain is Probable phosphoenolpyruvate synthase (ppsA) from Archaeoglobus fulgidus (strain ATCC 49558 / DSM 4304 / JCM 9628 / NBRC 100126 / VC-16).